Reading from the N-terminus, the 25-residue chain is Alpha-lytic protease (25 aa).

It belongs to the peptidase S1 family.

It catalyses the reaction Preferential cleavage: Ala-|-Xaa, Val-|-Xaa in bacterial cell walls, elastin and other proteins.. This is Alpha-lytic protease from Achromobacter lyticus.